A 484-amino-acid chain; its full sequence is ATP synthase subunit beta (484 aa).

169–176 (GGAGVGKT) lines the ATP pocket.

Belongs to the ATPase alpha/beta chains family. In terms of assembly, F-type ATPases have 2 components, CF(1) - the catalytic core - and CF(0) - the membrane proton channel. CF(1) has five subunits: alpha(3), beta(3), gamma(1), delta(1), epsilon(1). CF(0) has three main subunits: a(1), b(2) and c(9-12). The alpha and beta chains form an alternating ring which encloses part of the gamma chain. CF(1) is attached to CF(0) by a central stalk formed by the gamma and epsilon chains, while a peripheral stalk is formed by the delta and b chains.

The protein resides in the cell membrane. The enzyme catalyses ATP + H2O + 4 H(+)(in) = ADP + phosphate + 5 H(+)(out). Produces ATP from ADP in the presence of a proton gradient across the membrane. The catalytic sites are hosted primarily by the beta subunits. The polypeptide is ATP synthase subunit beta (Nocardioides sp. (strain ATCC BAA-499 / JS614)).